Here is a 229-residue protein sequence, read N- to C-terminus: PKHD-type hydroxylase BRADO4652 (229 aa).

The Fe2OG dioxygenase domain maps to 78–180; it reads QIFPPLFNRY…RVASFFWMQS (103 aa). Fe cation contacts are provided by His98, Asp100, and His161. Arg171 lines the 2-oxoglutarate pocket.

Fe(2+) serves as cofactor. The cofactor is L-ascorbate.

In Bradyrhizobium sp. (strain ORS 278), this protein is PKHD-type hydroxylase BRADO4652.